A 270-amino-acid polypeptide reads, in one-letter code: Elongation factor Tu (270 aa).

Positions 1 to 103 (GILVVSAADG…AVDDYIPTPE (103 aa)) constitute a tr-type G domain. 35 to 38 (NKVD) contributes to the GTP binding site.

It belongs to the TRAFAC class translation factor GTPase superfamily. Classic translation factor GTPase family. EF-Tu/EF-1A subfamily. Monomer.

It is found in the cytoplasm. It catalyses the reaction GTP + H2O = GDP + phosphate + H(+). GTP hydrolase that promotes the GTP-dependent binding of aminoacyl-tRNA to the A-site of ribosomes during protein biosynthesis. This is Elongation factor Tu (tuf) from Staphylococcus warneri.